The primary structure comprises 266 residues: Undecaprenyl-diphosphatase (266 aa).

A run of 7 helical transmembrane segments spans residues N41 to W61, T80 to F100, I107 to A127, I140 to L160, L180 to V200, I213 to C233, and L245 to L265.

It belongs to the UppP family.

It localises to the cell inner membrane. The enzyme catalyses di-trans,octa-cis-undecaprenyl diphosphate + H2O = di-trans,octa-cis-undecaprenyl phosphate + phosphate + H(+). Catalyzes the dephosphorylation of undecaprenyl diphosphate (UPP). Confers resistance to bacitracin. This chain is Undecaprenyl-diphosphatase, found in Parabacteroides distasonis (strain ATCC 8503 / DSM 20701 / CIP 104284 / JCM 5825 / NCTC 11152).